Here is a 419-residue protein sequence, read N- to C-terminus: UDP-N-acetylglucosamine 1-carboxyvinyltransferase (419 aa).

Residue 22 to 23 (KN) participates in phosphoenolpyruvate binding. R93 lines the UDP-N-acetyl-alpha-D-glucosamine pocket. C117 (proton donor) is an active-site residue. The residue at position 117 (C117) is a 2-(S-cysteinyl)pyruvic acid O-phosphothioketal. UDP-N-acetyl-alpha-D-glucosamine contacts are provided by residues 122 to 126 (RPVDQ), D305, and I327.

It belongs to the EPSP synthase family. MurA subfamily.

The protein resides in the cytoplasm. The enzyme catalyses phosphoenolpyruvate + UDP-N-acetyl-alpha-D-glucosamine = UDP-N-acetyl-3-O-(1-carboxyvinyl)-alpha-D-glucosamine + phosphate. It participates in cell wall biogenesis; peptidoglycan biosynthesis. Functionally, cell wall formation. Adds enolpyruvyl to UDP-N-acetylglucosamine. The chain is UDP-N-acetylglucosamine 1-carboxyvinyltransferase from Dichelobacter nodosus (strain VCS1703A).